The following is a 185-amino-acid chain: Endonuclease IV (185 aa).

It catalyses the reaction Endonucleolytic cleavage of the 5' phosphodiester bond of deoxycytidine in single-stranded DNA.. Its function is as follows. Cleaves single-stranded DNA in a dC-specific manner. The cleavage occurs exclusively at the 5'-proximal position (dC1) within a dCs tract having a minimal size of 6 bases. These specific cleavages may have a detrimental effect on the replication of host dC-containing DNA. The sequence is that of Endonuclease IV (denB) from Enterobacteria phage T4 (Bacteriophage T4).